The sequence spans 398 residues: Acetate kinase (398 aa).

Residue N8 coordinates Mg(2+). K15 contacts ATP. R89 lines the substrate pocket. D146 functions as the Proton donor/acceptor in the catalytic mechanism. ATP contacts are provided by residues 206–210 (HIGNG), 283–285 (DMR), and 331–335 (GMGEN). Residue E383 coordinates Mg(2+).

It belongs to the acetokinase family. Homodimer. The cofactor is Mg(2+). Mn(2+) serves as cofactor.

Its subcellular location is the cytoplasm. The catalysed reaction is acetate + ATP = acetyl phosphate + ADP. It functions in the pathway metabolic intermediate biosynthesis; acetyl-CoA biosynthesis; acetyl-CoA from acetate: step 1/2. Catalyzes the formation of acetyl phosphate from acetate and ATP. Can also catalyze the reverse reaction. The protein is Acetate kinase of Streptococcus pyogenes serotype M28 (strain MGAS6180).